Reading from the N-terminus, the 478-residue chain is Protein nucleotidyltransferase YdiU (478 aa).

ATP-binding residues include glycine 83, glycine 85, arginine 86, lysine 106, aspartate 118, glycine 119, arginine 169, and arginine 176. Catalysis depends on aspartate 245, which acts as the Proton acceptor. Mg(2+)-binding residues include asparagine 246 and aspartate 255. Residue aspartate 255 participates in ATP binding.

This sequence belongs to the SELO family. Requires Mg(2+) as cofactor. It depends on Mn(2+) as a cofactor.

The enzyme catalyses L-seryl-[protein] + ATP = 3-O-(5'-adenylyl)-L-seryl-[protein] + diphosphate. It carries out the reaction L-threonyl-[protein] + ATP = 3-O-(5'-adenylyl)-L-threonyl-[protein] + diphosphate. The catalysed reaction is L-tyrosyl-[protein] + ATP = O-(5'-adenylyl)-L-tyrosyl-[protein] + diphosphate. It catalyses the reaction L-histidyl-[protein] + UTP = N(tele)-(5'-uridylyl)-L-histidyl-[protein] + diphosphate. The enzyme catalyses L-seryl-[protein] + UTP = O-(5'-uridylyl)-L-seryl-[protein] + diphosphate. It carries out the reaction L-tyrosyl-[protein] + UTP = O-(5'-uridylyl)-L-tyrosyl-[protein] + diphosphate. Its function is as follows. Nucleotidyltransferase involved in the post-translational modification of proteins. It can catalyze the addition of adenosine monophosphate (AMP) or uridine monophosphate (UMP) to a protein, resulting in modifications known as AMPylation and UMPylation. This is Protein nucleotidyltransferase YdiU from Exiguobacterium sp. (strain ATCC BAA-1283 / AT1b).